An 872-amino-acid chain; its full sequence is Alanine--tRNA ligase (872 aa).

Zn(2+) is bound by residues His567, His571, Cys669, and His673.

The protein belongs to the class-II aminoacyl-tRNA synthetase family. The cofactor is Zn(2+).

The protein resides in the cytoplasm. The enzyme catalyses tRNA(Ala) + L-alanine + ATP = L-alanyl-tRNA(Ala) + AMP + diphosphate. In terms of biological role, catalyzes the attachment of alanine to tRNA(Ala) in a two-step reaction: alanine is first activated by ATP to form Ala-AMP and then transferred to the acceptor end of tRNA(Ala). Also edits incorrectly charged Ser-tRNA(Ala) and Gly-tRNA(Ala) via its editing domain. The chain is Alanine--tRNA ligase from Streptococcus pyogenes serotype M5 (strain Manfredo).